A 71-amino-acid polypeptide reads, in one-letter code: UPF0352 protein VCM66_1964 (71 aa).

This sequence belongs to the UPF0352 family.

The chain is UPF0352 protein VCM66_1964 from Vibrio cholerae serotype O1 (strain M66-2).